A 370-amino-acid chain; its full sequence is DNA replication and repair protein RecF (370 aa).

33 to 40 is a binding site for ATP; that stretch reads GPNAAGKT.

It belongs to the RecF family.

The protein resides in the cytoplasm. Its function is as follows. The RecF protein is involved in DNA metabolism; it is required for DNA replication and normal SOS inducibility. RecF binds preferentially to single-stranded, linear DNA. It also seems to bind ATP. The sequence is that of DNA replication and repair protein RecF from Moorella thermoacetica (strain ATCC 39073 / JCM 9320).